The following is a 226-amino-acid chain: Matrix protein (226 aa).

The dynamin binding motif lies at 2–4; sequence KSL. The PPXY motif motif lies at 28 to 31; that stretch reads PPSY. A PTAP/PSAP motif motif is present at residues 40–43; that stretch reads PSAP.

Belongs to the vesiculoviruses matrix protein family. As to quaternary structure, homomultimer. Interacts with viral nucleocapsid; this interaction contributes to the virion assembly. Interacts with the viral envelope glycoprotein; this interaction contributes to the virion assembly. Interacts with host RAE1-NUP98 complex. Interacts with host NEDD4 and TSG101. Interacts with host dynamin. Interacts with host NDUFAF4; the interaction inhibits viral propagation and is independent of interferon activation. Interacts with host GTF2H5; the interaction may inhibit host transcription. Phosphorylated by host.

The protein resides in the virion. It localises to the host endomembrane system. Its subcellular location is the host nucleus membrane. It is found in the host nucleus. The protein localises to the host cytoplasm. Functionally, forms a double layer around the helical nucleocapsid, the inner matrix layer binding to the N helix and the outer matrix layer binding to the envelope glycoprotein. Plays a major role in assembly and budding of virion, by recruiting cellular partners of the ESCRT complexes that play a key role in releasing the budding particle from the host membrane. Condensates the ribonucleocapsid core during virus assembly. Inhibits the host mRNA nuclear export thereby inducing the shut off of cellular transcription and preventing the interferon signaling and the establishment of antiviral state in infected cells. This shutoff presumably inhibits interferon signaling and thus establishment of antiviral state in virus infected cells. Induces cell-rounding, cytoskeleton disorganization and apoptosis in infected cell. Inhibits host transcription, possibly through interaction with host DNA repair factor IIH/TFIIH GTF2H5 subunit. In Isfahan virus (ISFV), this protein is Matrix protein (M).